The chain runs to 338 residues: Glutamyl-tRNA reductase (338 aa).

Substrate contacts are provided by residues 50 to 53 (TCHR), Ser-102, 107 to 109 (ETE), and Gln-113. The Nucleophile role is filled by Cys-51. 181-186 (GYSEIN) is an NADP(+) binding site.

Belongs to the glutamyl-tRNA reductase family. As to quaternary structure, homodimer.

The catalysed reaction is (S)-4-amino-5-oxopentanoate + tRNA(Glu) + NADP(+) = L-glutamyl-tRNA(Glu) + NADPH + H(+). It participates in porphyrin-containing compound metabolism; protoporphyrin-IX biosynthesis; 5-aminolevulinate from L-glutamyl-tRNA(Glu): step 1/2. Catalyzes the NADPH-dependent reduction of glutamyl-tRNA(Glu) to glutamate 1-semialdehyde (GSA). The polypeptide is Glutamyl-tRNA reductase (Chlamydia abortus (strain DSM 27085 / S26/3) (Chlamydophila abortus)).